We begin with the raw amino-acid sequence, 597 residues long: Centrosomal protein of 70 kDa (597 aa).

The disordered stretch occupies residues 1 to 24; that stretch reads MFPVAPKPQDSNQPSDRLMTEKQQ. 2 coiled-coil regions span residues 66 to 179 and 254 to 320; these read MRQN…QTEV and TYKG…QELI. The stretch at 483–516 is one TPR repeat; it reads NGVYPRMNEVYTRLGEMNNAVRNLQELLELDSSS.

As to quaternary structure, directly interacts with tubulin-gamma; this interaction determines centrosomal localization.

The protein resides in the cytoplasm. The protein localises to the cytoskeleton. Its subcellular location is the microtubule organizing center. It is found in the centrosome. Plays a role in the organization of both preexisting and nascent microtubules in interphase cells. During mitosis, required for the organization and orientation of the mitotic spindle. In Macaca fascicularis (Crab-eating macaque), this protein is Centrosomal protein of 70 kDa (CEP70).